The following is a 239-amino-acid chain: Pre-mRNA-splicing factor isy1 (239 aa).

This sequence belongs to the ISY1 family. In terms of assembly, associated with the spliceosome.

The protein resides in the cytoplasm. It is found in the nucleus. Involved in pre-mRNA splicing. The sequence is that of Pre-mRNA-splicing factor isy1 (msp-7) from Neurospora crassa (strain ATCC 24698 / 74-OR23-1A / CBS 708.71 / DSM 1257 / FGSC 987).